Reading from the N-terminus, the 409-residue chain is NADH-quinone oxidoreductase subunit D (409 aa).

The protein belongs to the complex I 49 kDa subunit family. In terms of assembly, NDH-1 is composed of 14 different subunits. Subunits NuoB, C, D, E, F, and G constitute the peripheral sector of the complex.

It localises to the cell inner membrane. The catalysed reaction is a quinone + NADH + 5 H(+)(in) = a quinol + NAD(+) + 4 H(+)(out). In terms of biological role, NDH-1 shuttles electrons from NADH, via FMN and iron-sulfur (Fe-S) centers, to quinones in the respiratory chain. The immediate electron acceptor for the enzyme in this species is believed to be ubiquinone. Couples the redox reaction to proton translocation (for every two electrons transferred, four hydrogen ions are translocated across the cytoplasmic membrane), and thus conserves the redox energy in a proton gradient. The chain is NADH-quinone oxidoreductase subunit D from Helicobacter pylori (strain P12).